Here is a 77-residue protein sequence, read N- to C-terminus: Conotoxin ArMSGL-0141 (77 aa).

A signal peptide spans 1-18 (MSGLGILVLTLLLLVYMA). Residues 19 to 44 (TSHQDAGEKQATQRDAINVRRRRSLT) constitute a propeptide that is removed on maturation. Cystine bridges form between Cys-51/Cys-63, Cys-55/Cys-71, and Cys-62/Cys-75. Phenylalanine amide is present on Phe-76.

This sequence belongs to the conotoxin O3 superfamily. In terms of tissue distribution, expressed by the venom duct.

It localises to the secreted. The sequence is that of Conotoxin ArMSGL-0141 from Conus arenatus (Sand-dusted cone).